Reading from the N-terminus, the 515-residue chain is Putative ribose/galactose/methyl galactoside import ATP-binding protein (515 aa).

ABC transporter domains lie at 25–261 and 268–515; these read LEVL…VGRE and LREK…SGLN. An ATP-binding site is contributed by 57 to 64; sequence GENGAGKS.

The protein belongs to the ABC transporter superfamily. Carbohydrate importer 2 (CUT2) (TC 3.A.1.2) family.

It localises to the cell inner membrane. The enzyme catalyses D-ribose(out) + ATP + H2O = D-ribose(in) + ADP + phosphate + H(+). It catalyses the reaction D-galactose(out) + ATP + H2O = D-galactose(in) + ADP + phosphate + H(+). Part of an ABC transporter complex involved in carbohydrate import. Could be involved in ribose, galactose and/or methyl galactoside import. Responsible for energy coupling to the transport system. In Pseudomonas fluorescens (strain ATCC BAA-477 / NRRL B-23932 / Pf-5), this protein is Putative ribose/galactose/methyl galactoside import ATP-binding protein.